A 245-amino-acid polypeptide reads, in one-letter code: 1-(5-phosphoribosyl)-5-[(5-phosphoribosylamino)methylideneamino] imidazole-4-carboxamide isomerase (245 aa).

Residue Asp-7 is the Proton acceptor of the active site. Asp-129 functions as the Proton donor in the catalytic mechanism.

This sequence belongs to the HisA/HisF family.

The protein localises to the cytoplasm. The enzyme catalyses 1-(5-phospho-beta-D-ribosyl)-5-[(5-phospho-beta-D-ribosylamino)methylideneamino]imidazole-4-carboxamide = 5-[(5-phospho-1-deoxy-D-ribulos-1-ylimino)methylamino]-1-(5-phospho-beta-D-ribosyl)imidazole-4-carboxamide. Its pathway is amino-acid biosynthesis; L-histidine biosynthesis; L-histidine from 5-phospho-alpha-D-ribose 1-diphosphate: step 4/9. The polypeptide is 1-(5-phosphoribosyl)-5-[(5-phosphoribosylamino)methylideneamino] imidazole-4-carboxamide isomerase (Shewanella sp. (strain W3-18-1)).